The chain runs to 521 residues: Glucose-6-phosphate isomerase (521 aa).

The active-site Proton donor is glutamate 327. Catalysis depends on residues histidine 358 and lysine 486.

The protein belongs to the GPI family.

It localises to the cytoplasm. The catalysed reaction is alpha-D-glucose 6-phosphate = beta-D-fructose 6-phosphate. The protein operates within carbohydrate biosynthesis; gluconeogenesis. It participates in carbohydrate degradation; glycolysis; D-glyceraldehyde 3-phosphate and glycerone phosphate from D-glucose: step 2/4. Its function is as follows. Catalyzes the reversible isomerization of glucose-6-phosphate to fructose-6-phosphate. The chain is Glucose-6-phosphate isomerase from Bordetella petrii (strain ATCC BAA-461 / DSM 12804 / CCUG 43448).